The following is a 286-amino-acid chain: Bifunctional protein FolD (286 aa).

NADP(+)-binding positions include 165–167, Ser-190, and Val-231; that span reads GRS.

Belongs to the tetrahydrofolate dehydrogenase/cyclohydrolase family. In terms of assembly, homodimer.

It catalyses the reaction (6R)-5,10-methylene-5,6,7,8-tetrahydrofolate + NADP(+) = (6R)-5,10-methenyltetrahydrofolate + NADPH. The enzyme catalyses (6R)-5,10-methenyltetrahydrofolate + H2O = (6R)-10-formyltetrahydrofolate + H(+). It functions in the pathway one-carbon metabolism; tetrahydrofolate interconversion. Functionally, catalyzes the oxidation of 5,10-methylenetetrahydrofolate to 5,10-methenyltetrahydrofolate and then the hydrolysis of 5,10-methenyltetrahydrofolate to 10-formyltetrahydrofolate. The polypeptide is Bifunctional protein FolD (Bacillus cereus (strain ATCC 14579 / DSM 31 / CCUG 7414 / JCM 2152 / NBRC 15305 / NCIMB 9373 / NCTC 2599 / NRRL B-3711)).